A 310-amino-acid polypeptide reads, in one-letter code: Ribosomal RNA small subunit methyltransferase H (310 aa).

Residues 32 to 34, D52, F79, D100, and Q107 each bind S-adenosyl-L-methionine; that span reads GGH.

This sequence belongs to the methyltransferase superfamily. RsmH family.

It is found in the cytoplasm. The catalysed reaction is cytidine(1402) in 16S rRNA + S-adenosyl-L-methionine = N(4)-methylcytidine(1402) in 16S rRNA + S-adenosyl-L-homocysteine + H(+). Functionally, specifically methylates the N4 position of cytidine in position 1402 (C1402) of 16S rRNA. The protein is Ribosomal RNA small subunit methyltransferase H of Geobacillus kaustophilus (strain HTA426).